A 473-amino-acid polypeptide reads, in one-letter code: Glutamate--tRNA ligase 2 (473 aa).

A 'HIGH' region motif is present at residues 11–21; that stretch reads PSPTGYLHIGG. Basic and acidic residues predominate over residues 113 to 133; that stretch reads KARAEGRPPRYDGRWRDRDPS. The segment at 113–136 is disordered; it reads KARAEGRPPRYDGRWRDRDPSEAP. The 'KMSKS' region signature appears at 240–244; that stretch reads KLSKR. Lys243 contributes to the ATP binding site.

It belongs to the class-I aminoacyl-tRNA synthetase family. Glutamate--tRNA ligase type 1 subfamily. As to quaternary structure, monomer.

It localises to the cytoplasm. It carries out the reaction tRNA(Glu) + L-glutamate + ATP = L-glutamyl-tRNA(Glu) + AMP + diphosphate. In terms of biological role, catalyzes the attachment of glutamate to tRNA(Glu) in a two-step reaction: glutamate is first activated by ATP to form Glu-AMP and then transferred to the acceptor end of tRNA(Glu). This is Glutamate--tRNA ligase 2 from Brucella abortus (strain S19).